The primary structure comprises 69 residues: Toxin Lc b (69 aa).

4 disulfides stabilise this stretch: C3–C20, C13–C41, C45–C56, and C57–C62.

It belongs to the three-finger toxin family. Long-chain subfamily. Type II alpha-neurotoxin sub-subfamily. In terms of tissue distribution, expressed by the venom gland.

It is found in the secreted. Binds with high affinity to muscular nicotinic acetylcholine receptors (nAChRs), whereas it binds with a low affinity to neuronal alpha-7/CHRNA7 nAChRs. The protein is Toxin Lc b of Laticauda colubrina (Yellow-lipped sea krait).